A 377-amino-acid polypeptide reads, in one-letter code: Lipoyl synthase, mitochondrial (377 aa).

[4Fe-4S] cluster-binding residues include cysteine 103, cysteine 108, cysteine 114, cysteine 134, cysteine 138, cysteine 141, and serine 349. One can recognise a Radical SAM core domain in the interval 119 to 338; the sequence is EHGTQTATIM…EERGNELGFL (220 aa).

Belongs to the radical SAM superfamily. Lipoyl synthase family. The cofactor is [4Fe-4S] cluster.

The protein localises to the mitochondrion. The catalysed reaction is [[Fe-S] cluster scaffold protein carrying a second [4Fe-4S](2+) cluster] + N(6)-octanoyl-L-lysyl-[protein] + 2 oxidized [2Fe-2S]-[ferredoxin] + 2 S-adenosyl-L-methionine + 4 H(+) = [[Fe-S] cluster scaffold protein] + N(6)-[(R)-dihydrolipoyl]-L-lysyl-[protein] + 4 Fe(3+) + 2 hydrogen sulfide + 2 5'-deoxyadenosine + 2 L-methionine + 2 reduced [2Fe-2S]-[ferredoxin]. The protein operates within protein modification; protein lipoylation via endogenous pathway; protein N(6)-(lipoyl)lysine from octanoyl-[acyl-carrier-protein]: step 2/2. Catalyzes the radical-mediated insertion of two sulfur atoms into the C-6 and C-8 positions of the octanoyl moiety bound to the lipoyl domains of lipoate-dependent enzymes, thereby converting the octanoylated domains into lipoylated derivatives. This chain is Lipoyl synthase, mitochondrial, found in Drosophila melanogaster (Fruit fly).